Consider the following 321-residue polypeptide: tRNA U34 carboxymethyltransferase (321 aa).

Residues Lys90, Trp104, Lys109, Gly129, 151-153, 180-181, Met195, Tyr199, and Arg314 each bind carboxy-S-adenosyl-L-methionine; these read DPT and IE.

Belongs to the class I-like SAM-binding methyltransferase superfamily. CmoB family. Homotetramer.

It catalyses the reaction carboxy-S-adenosyl-L-methionine + 5-hydroxyuridine(34) in tRNA = 5-carboxymethoxyuridine(34) in tRNA + S-adenosyl-L-homocysteine + H(+). Functionally, catalyzes carboxymethyl transfer from carboxy-S-adenosyl-L-methionine (Cx-SAM) to 5-hydroxyuridine (ho5U) to form 5-carboxymethoxyuridine (cmo5U) at position 34 in tRNAs. In Actinobacillus succinogenes (strain ATCC 55618 / DSM 22257 / CCUG 43843 / 130Z), this protein is tRNA U34 carboxymethyltransferase.